The chain runs to 551 residues: Chaperonin GroEL (551 aa).

Residues 30 to 33 (TLGP), Lys-51, 87 to 91 (DGTTT), Gly-415, 479 to 481 (NAA), and Asp-495 each bind ATP.

This sequence belongs to the chaperonin (HSP60) family. In terms of assembly, forms a cylinder of 14 subunits composed of two heptameric rings stacked back-to-back. Interacts with the co-chaperonin GroES.

It is found in the cytoplasm. The catalysed reaction is ATP + H2O + a folded polypeptide = ADP + phosphate + an unfolded polypeptide.. Its function is as follows. Together with its co-chaperonin GroES, plays an essential role in assisting protein folding. The GroEL-GroES system forms a nano-cage that allows encapsulation of the non-native substrate proteins and provides a physical environment optimized to promote and accelerate protein folding. The polypeptide is Chaperonin GroEL (Acidithiobacillus ferrooxidans (strain ATCC 23270 / DSM 14882 / CIP 104768 / NCIMB 8455) (Ferrobacillus ferrooxidans (strain ATCC 23270))).